The primary structure comprises 278 residues: Tryptophan synthase alpha chain (278 aa).

Residues Glu-50 and Asp-61 each act as proton acceptor in the active site.

Belongs to the TrpA family. As to quaternary structure, tetramer of two alpha and two beta chains.

The catalysed reaction is (1S,2R)-1-C-(indol-3-yl)glycerol 3-phosphate + L-serine = D-glyceraldehyde 3-phosphate + L-tryptophan + H2O. It participates in amino-acid biosynthesis; L-tryptophan biosynthesis; L-tryptophan from chorismate: step 5/5. Functionally, the alpha subunit is responsible for the aldol cleavage of indoleglycerol phosphate to indole and glyceraldehyde 3-phosphate. The polypeptide is Tryptophan synthase alpha chain (Rhodopseudomonas palustris (strain BisA53)).